We begin with the raw amino-acid sequence, 668 residues long: DNA ligase (668 aa).

Residues 37–41, 86–87, and glutamate 116 contribute to the NAD(+) site; these read DNVYD and SM. Lysine 118 acts as the N6-AMP-lysine intermediate in catalysis. The NAD(+) site is built by arginine 139, glutamate 173, lysine 288, and lysine 312. The Zn(2+) site is built by cysteine 406, cysteine 409, cysteine 424, and cysteine 429. The 78-residue stretch at 591–668 folds into the BRCT domain; it reads IPDNPFKDKT…TEEEAIAQIK (78 aa).

Belongs to the NAD-dependent DNA ligase family. LigA subfamily. Mg(2+) serves as cofactor. Requires Mn(2+) as cofactor.

The enzyme catalyses NAD(+) + (deoxyribonucleotide)n-3'-hydroxyl + 5'-phospho-(deoxyribonucleotide)m = (deoxyribonucleotide)n+m + AMP + beta-nicotinamide D-nucleotide.. Its function is as follows. DNA ligase that catalyzes the formation of phosphodiester linkages between 5'-phosphoryl and 3'-hydroxyl groups in double-stranded DNA using NAD as a coenzyme and as the energy source for the reaction. It is essential for DNA replication and repair of damaged DNA. This Lactobacillus acidophilus (strain ATCC 700396 / NCK56 / N2 / NCFM) protein is DNA ligase.